The following is a 159-amino-acid chain: Ribosomal RNA large subunit methyltransferase H (159 aa).

Residues L76, G108, and 127–132 (FGLLTL) each bind S-adenosyl-L-methionine.

This sequence belongs to the RNA methyltransferase RlmH family. In terms of assembly, homodimer.

Its subcellular location is the cytoplasm. It catalyses the reaction pseudouridine(1915) in 23S rRNA + S-adenosyl-L-methionine = N(3)-methylpseudouridine(1915) in 23S rRNA + S-adenosyl-L-homocysteine + H(+). Specifically methylates the pseudouridine at position 1915 (m3Psi1915) in 23S rRNA. The polypeptide is Ribosomal RNA large subunit methyltransferase H (Leuconostoc citreum (strain KM20)).